The primary structure comprises 187 residues: Orotate phosphoribosyltransferase (187 aa).

5-phospho-alpha-D-ribose 1-diphosphate-binding positions include arginine 99, lysine 100, lysine 103, histidine 105, and 125 to 133; that span reads DDVITTGGS. Orotate-binding residues include threonine 129 and arginine 157.

Belongs to the purine/pyrimidine phosphoribosyltransferase family. PyrE subfamily. In terms of assembly, homodimer. The cofactor is Mg(2+).

It catalyses the reaction orotidine 5'-phosphate + diphosphate = orotate + 5-phospho-alpha-D-ribose 1-diphosphate. It participates in pyrimidine metabolism; UMP biosynthesis via de novo pathway; UMP from orotate: step 1/2. Catalyzes the transfer of a ribosyl phosphate group from 5-phosphoribose 1-diphosphate to orotate, leading to the formation of orotidine monophosphate (OMP). The sequence is that of Orotate phosphoribosyltransferase from Leptospira borgpetersenii serovar Hardjo-bovis (strain L550).